The primary structure comprises 254 residues: MLILLSPAKTMTGTSKIKAPQGTTPRFQQEANEIALHMTQFPIDELSRILKLSPKLAAECYRRYQDFHAEDKQPLQAILAYTGVVFKNISPKDFTEEDFLFSQEHMRFVSGCYGLLRPLDLIKPYRMEFDVKIPELGDGNMYAFWKDRQTNTLIHDVRQGDRILLNLASLDIQPSFQWKEVERSVRIITPEFKIWKNGKAETIVIYAKMCRGQMSRYLIKNRISDPEALKAFTWEGFSYKESMSEGDNWVFLQE.

It belongs to the UPF0246 family.

This is UPF0246 protein BDI_1226 from Parabacteroides distasonis (strain ATCC 8503 / DSM 20701 / CIP 104284 / JCM 5825 / NCTC 11152).